A 360-amino-acid chain; its full sequence is Phenylalanine--tRNA ligase alpha subunit (360 aa).

A Mg(2+)-binding site is contributed by Glu260.

Belongs to the class-II aminoacyl-tRNA synthetase family. Phe-tRNA synthetase alpha subunit type 1 subfamily. Tetramer of two alpha and two beta subunits. The cofactor is Mg(2+).

The protein localises to the cytoplasm. The catalysed reaction is tRNA(Phe) + L-phenylalanine + ATP = L-phenylalanyl-tRNA(Phe) + AMP + diphosphate + H(+). The chain is Phenylalanine--tRNA ligase alpha subunit from Bradyrhizobium sp. (strain ORS 278).